Reading from the N-terminus, the 134-residue chain is Mini-ribonuclease 3 (134 aa).

The active site involves Asp22.

It belongs to the MrnC RNase family. Homodimer. Mg(2+) is required as a cofactor.

It is found in the cytoplasm. In terms of biological role, involved in correct processing of both the 5' and 3' ends of 23S rRNA precursor. Processes 30S rRNA precursor transcript even in absence of ribonuclease 3 (Rnc); Rnc processes 30S rRNA into smaller rRNA precursors. This Staphylococcus aureus (strain NCTC 8325 / PS 47) protein is Mini-ribonuclease 3.